Reading from the N-terminus, the 519-residue chain is Xylose import ATP-binding protein XylG (519 aa).

2 consecutive ABC transporter domains span residues Met6–Glu245 and Phe262–Val507. Gly38–Ser45 lines the ATP pocket.

It belongs to the ABC transporter superfamily. Xylose importer (TC 3.A.1.2.4) family. In terms of assembly, the complex is composed of two ATP-binding proteins (XylG), two transmembrane proteins (XylH) and a solute-binding protein (XylF).

Its subcellular location is the cell inner membrane. It carries out the reaction D-xylose(out) + ATP + H2O = D-xylose(in) + ADP + phosphate + H(+). Functionally, part of the ABC transporter complex XylFGH involved in xylose import. Responsible for energy coupling to the transport system. In Paraburkholderia xenovorans (strain LB400), this protein is Xylose import ATP-binding protein XylG.